Reading from the N-terminus, the 156-residue chain is Arginine repressor (156 aa).

It belongs to the ArgR family.

It localises to the cytoplasm. It participates in amino-acid biosynthesis; L-arginine biosynthesis [regulation]. Its function is as follows. Regulates arginine biosynthesis genes. This Shewanella sp. (strain ANA-3) protein is Arginine repressor.